Consider the following 493-residue polypeptide: Malonyl-CoA decarboxylase, mitochondrial (493 aa).

Residues 1 to 39 (MRGFGPGLTARRLLPLRLPPRPPGPRLASGQAAGALERA) constitute a mitochondrion transit peptide. Residues 40 to 190 (MDELLRRAVP…VLKGMLSEWF (151 aa)) are alpha-helical domain. Position 59 is an N6-acetyllysine (K59). K168 is modified (N6-acetyllysine; alternate). Position 168 is an N6-succinyllysine; alternate (K168). Positions 191 to 493 (SSGFLNLERV…VAQFQKNSKL (303 aa)) are catalytic domain. At K211 the chain carries N6-acetyllysine. Position 222 is an N6-succinyllysine (K222). Malonyl-CoA contacts are provided by residues 299 to 305 (QGVELGT) and S329. The Proton acceptor role is filled by S329. K389 carries the N6-acetyllysine modification. Residue H423 coordinates malonyl-CoA. The active-site Proton donor is H423. The residue at position 472 (K472) is an N6-acetyllysine. A Microbody targeting signal motif is present at residues 491 to 493 (SKL).

In terms of assembly, homotetramer. Dimer of dimers. The two subunits within a dimer display conformational differences suggesting that at any given moment, only one of the two subunits is competent for malonyl-CoA binding and catalytic activity. Under oxidizing conditions, can form disulfide-linked homotetramers (in vitro). Associates with the peroxisomal targeting signal receptor PEX5. Post-translationally, acetylation at Lys-472 activates malonyl-CoA decarboxylase activity. Deacetylation at Lys-472 by SIRT4 represses activity, leading to promote lipogenesis. In terms of processing, interchain disulfide bonds may form in peroxisomes (Potential). Interchain disulfide bonds are not expected to form in the reducing environment of the cytoplasm and mitochondria. Expressed in fibroblasts and hepatoblastoma cells (at protein level). Expressed strongly in heart, liver, skeletal muscle, kidney and pancreas. Expressed in myotubes. Expressed weakly in brain, placenta, spleen, thymus, testis, ovary and small intestine.

The protein resides in the cytoplasm. The protein localises to the mitochondrion matrix. It is found in the peroxisome. It localises to the peroxisome matrix. The catalysed reaction is malonyl-CoA + H(+) = acetyl-CoA + CO2. The protein operates within metabolic intermediate biosynthesis; acetyl-CoA biosynthesis; acetyl-CoA from malonyl-CoA: step 1/1. With respect to regulation, malonyl-CoA decarboxylase activity does not require any cofactors or divalent metal ions. Formation of interchain disulfide bonds leads to positive cooperativity between active sites and increases the affinity for malonyl-CoA and the catalytic efficiency (in vitro). Its function is as follows. Catalyzes the conversion of malonyl-CoA to acetyl-CoA. In the fatty acid biosynthesis MCD selectively removes malonyl-CoA and thus assures that methyl-malonyl-CoA is the only chain elongating substrate for fatty acid synthase and that fatty acids with multiple methyl side chains are produced. In peroxisomes it may be involved in degrading intraperoxisomal malonyl-CoA, which is generated by the peroxisomal beta-oxidation of odd chain-length dicarboxylic fatty acids. Plays a role in the metabolic balance between glucose and lipid oxidation in muscle independent of alterations in insulin signaling. May play a role in controlling the extent of ischemic injury by promoting glucose oxidation. The sequence is that of Malonyl-CoA decarboxylase, mitochondrial from Homo sapiens (Human).